A 389-amino-acid polypeptide reads, in one-letter code: (2R)-sulfolactate sulfo-lyase subunit beta (389 aa).

It belongs to the UxaA family. (2R)-sulfolactate sulfo-lyase is composed of a SuyA and a SuyB subunit.

It is found in the cytoplasm. The enzyme catalyses (2R)-3-sulfolactate = sulfite + pyruvate + H(+). Its function is as follows. Together with SuyA, desulfonates sulfolactate to pyruvate and sulfite. This Chromohalobacter salexigens (strain ATCC BAA-138 / DSM 3043 / CIP 106854 / NCIMB 13768 / 1H11) protein is (2R)-sulfolactate sulfo-lyase subunit beta (suyB).